The sequence spans 4687 residues: Plectin (4687 aa).

The globular 1 stretch occupies residues 1–1473 (MVAGMLMPLD…SELTTLTSQY (1473 aa)). The residue at position 21 (Arg-21) is a Phosphoserine. Val-26 carries the post-translational modification Phosphotyrosine. Residues 111–158 (RRRSPHVQTMQGPLGCPPKRGPLPAEDPAREERQVYRRKEREEGAPET) are disordered. The span at 137 to 154 (DPAREERQVYRRKEREEG) shows a compositional bias: basic and acidic residues. The interval 181–406 (DERDRVQKKT…YVSSLYDAMP (226 aa)) is actin-binding. Calponin-homology (CH) domains lie at 185–288 (RVQK…LHFK) and 301–406 (MTAK…DAMP). One copy of the Spectrin 1 repeat lies at 648 to 722 (LQSTQRRPEL…ERARNDESQL (75 aa)). At Ser-723 the chain carries Phosphoserine. Spectrin repeat units lie at residues 743 to 827 (KLLN…REDH) and 840 to 933 (LQTQ…AIVQ). A Phosphothreonine modification is found at Thr-818. The SH3 domain maps to 944–1001 (RGHVPLLAVCDYKQVEVTVHKGDQCQLVGPAQPFHWKVLSSSGSEAAVPSVCFLVPPP). Position 1050 is a phosphoserine (Ser-1050). The stretch at 1318–1418 (RERVTQLLER…QKFAKQYINA (101 aa)) is one Spectrin 4 repeat. A Phosphoserine modification is found at Ser-1438. Coiled-coil stretches lie at residues 1472 to 1692 (QYIK…ERWL) and 1724 to 2760 (SFAE…TSQA). The segment at 1474–2758 (IKFISETLRR…LAHSEEIATS (1285 aa)) is central fibrous rod domain. Residues 1623–1647 (EEAEAQKRQAQEEAERLRRQVQDES) are disordered. At Ser-1724 the chain carries Phosphoserine. Lys-1728 carries the N6-acetyllysine modification. Disordered stretches follow at residues 1741 to 1764 (VTVT…ERAR), 1796 to 1846 (SLAQ…GTAQ), 2096 to 2139 (EDTM…AEEE), 2164 to 2188 (LRER…KRLQ), and 2218 to 2307 (RLRS…DAEM). Basic and acidic residues-rich tracts occupy residues 1801-1839 (DAEK…KQRQ), 2096-2111 (EDTM…EAAR), and 2119-2131 (EEQR…ERVQ). The span at 2173 to 2182 (ARQLQLAQEA) shows a compositional bias: low complexity. Residues 2218–2261 (RLRSEAEAARRAAEEAEEAREQAEREAAQSRKQVEEAERLKQSA) are compositionally biased toward basic and acidic residues. Low complexity predominate over residues 2262-2275 (EEQAQAQAQAQAAA). Over residues 2276-2291 (EKLRKEAEQEAARRAQ) the composition is skewed to basic and acidic residues. Residue Ser-2634 is modified to Phosphoserine. Residue Lys-2639 is modified to N6-acetyllysine. The interval 2671–2710 (QEEQQRQQQQMEQEKQELVASMEEARRRQREAEEGVRRKQ) is disordered. Residues 2682-2710 (EQEKQELVASMEEARRRQREAEEGVRRKQ) show a composition bias toward basic and acidic residues. Residues 2759–4687 (QAAATKALPN…SLGGPESAVA (1929 aa)) form a globular 2 region. Position 2777 is a phosphoserine (Ser-2777). A Phosphotyrosine modification is found at Tyr-2784. Plectin repeat units follow at residues 2791–2828 (QKVP…REDV), 2829–2866 (RHYL…PGTA), 2867–2904 (LILL…PELH), 2905–2942 (HKLL…RDHG), 2943–2980 (IRLL…EEMN), and 2984–3018 (ADPS…PETG). Ser-2805 is subject to Phosphoserine. Thr-2889 is subject to Phosphothreonine. Phosphotyrosine is present on Tyr-3036. 2 positions are modified to N6-acetyllysine: Lys-3056 and Lys-3094. Plectin repeat units lie at residues 3119 to 3156 (ALVP…ADEV), 3157 to 3194 (RQAL…PEVA), 3195 to 3232 (VALL…PEMH), 3233 to 3270 (EKLL…REQG), 3271 to 3308 (LRLL…KETN), and 3311 to 3346 (LTSP…QLTG). Tyr-3365 is subject to Phosphotyrosine. The residue at position 3423 (Lys-3423) is an N6-acetyllysine. 5 Plectin repeats span residues 3488–3525 (RTLL…ASTA), 3526–3563 (TLLL…PELH), 3564–3601 (EKLL…RDHA), 3602–3639 (IRLL…EEMN), and 3643–3677 (ADPS…PETG). Ser-3583 carries the phosphoserine modification. A Phosphothreonine modification is found at Thr-3788. Residue Tyr-3793 is modified to Phosphotyrosine. Plectin repeat units lie at residues 3823-3860 (WRYL…AEVA), 3861-3898 (RLLL…PELH), 3899-3936 (DRLL…AEEA), 3937-3974 (LRLL…KDTH), and 3978-4011 (SEPS…DNSG). A Phosphothreonine modification is found at Thr-4033. Ser-4057 carries the phosphoserine modification. 6 Plectin repeats span residues 4066–4103 (QKFL…PGTA), 4104–4141 (FELL…PEFK), 4142–4179 (DKLL…KDHG), 4180–4217 (IRLL…EEMN), 4221–4255 (TDPS…PQTG), and 4268–4308 (RKTS…HQTY). The segment at 4253 to 4303 (QTGLCLLPLKEKKRERKTSSKSSVRKRRVVIVDPETGKEMSVYEAYRKGLI) is binding to intermediate filaments. Phosphoserine occurs at positions 4385, 4387, 4388, 4389, 4392, 4393, 4394, and 4395. Phosphotyrosine is present on Tyr-4396. 2 positions are modified to phosphoserine: Ser-4399 and Ser-4409. Plectin repeat units follow at residues 4411–4448 (SDPT…NITG), 4449–4486 (QRLL…KIMV), 4487–4524 (DRIN…YEAG), 4525–4562 (QRFL…ARTA), and 4563–4600 (QKLR…EGTG). The residue at position 4414 (Thr-4414) is a Phosphothreonine. Thr-4542 carries the phosphothreonine; by CDK1 modification. Ser-4610 and Ser-4616 each carry phosphoserine. Residues 4614-4674 (YYSPYSVSGS…SGYGRRYASG (61 aa)) are compositionally biased toward low complexity. Residues 4614–4687 (YYSPYSVSGS…SLGGPESAVA (74 aa)) are disordered. Tyr-4618 is modified (phosphotyrosine). Residues Ser-4619, Ser-4621, and Ser-4625 each carry the phosphoserine modification. At Thr-4626 the chain carries Phosphothreonine. The tract at residues 4628–4643 (GSRTGSRTGSRAGSRR) is 4 X 4 AA tandem repeats of G-S-R-X. Phosphoserine is present on Ser-4629. 2 positions are modified to omega-N-methylarginine: Arg-4630 and Arg-4643. Phosphoserine occurs at positions 4645 and 4678.

Belongs to the plakin or cytolinker family. Homodimer or homotetramer. Interacts (via actin-binding domain) with SYNE3. Interacts (via calponin-homology (CH) 1 domain) with VIM (via rod region). Interacts (via N-terminus) with DST isoform 2 (via N-terminus). Interacts with FER. Interacts with TOR1A. Interacts with ANK3. Identified in complexes that contain VIM, EZR, AHNAK, BFSP1, BFSP2, ANK2, PLEC, PRX and spectrin. Post-translationally, phosphorylated by CDK1; regulates dissociation from intermediate filaments during mitosis. Isoform 2 is phosphorylated on Ser-21 and Tyr-26. Widely expressed with highest expression in skeletal muscle and lowest in thymus.

The protein localises to the cytoplasm. It localises to the cytoskeleton. Its subcellular location is the cell junction. It is found in the hemidesmosome. The protein resides in the cell projection. The protein localises to the podosome. Functionally, interlinks intermediate filaments with microtubules and microfilaments and anchors intermediate filaments to desmosomes or hemidesmosomes. May be involved not only in the cross-linking and stabilization of cytoskeletal intermediate filaments network, but also in the regulation of their dynamics. This Rattus norvegicus (Rat) protein is Plectin (Plec).